Reading from the N-terminus, the 230-residue chain is CRP-like protein Clp (230 aa).

Position 18–139 (18–139) interacts with a nucleoside 3',5'-cyclic phosphate; it reads PSLALDAGTI…APKILYAIGV (122 aa). The HTH crp-type domain maps to 158–230; the sequence is LDVTDRIVRT…GKTVVLYGTR (73 aa). The H-T-H motif DNA-binding region spans 190–209; it reads RQELARLVGCSREMAGRVLK.

Homodimer.

The protein resides in the cytoplasm. With respect to regulation, allosterically inhibited by cyclic di-GMP (c-di-GMP), which binds to Clp and abolishes its ability to bind its target gene promoter. Functionally, global transcriptional regulator that regulates virulence factors production by activating or repressing the expression of a large set of genes in diffusible signal factor (DSF) pathway. This Xanthomonas oryzae pv. oryzae (strain MAFF 311018) protein is CRP-like protein Clp (clp).